Consider the following 285-residue polypeptide: Avenin-like b2 (285 aa).

Positions 1–18 (MKVFILALLALTATTAIA) are cleaved as a signal peptide.

Belongs to the prolamin family. Post-translationally, contains disulfide bonds.

Seed storage protein. Might be integrated via inter-chain disulfide bonds within the glutenin polymer. The polypeptide is Avenin-like b2 (Triticum aestivum (Wheat)).